We begin with the raw amino-acid sequence, 599 residues long: Sulfite reductase [NADPH] flavoprotein alpha-component (599 aa).

The region spanning 64–202 (ITIISASQTG…AASEWRARVV (139 aa)) is the Flavodoxin-like domain. FMN contacts are provided by residues 70–75 (SQTGNA), 117–120 (STQG), and 153–162 (LGDSSYEFFC). Residues 234-448 (DSPLVASLSV…IEHNDNFRLP (215 aa)) form the FAD-binding FR-type domain. FAD-binding positions include Thr-322, Ala-356, 386 to 389 (RLYS), 404 to 406 (TVG), Tyr-410, and 419 to 422 (GGAS). NADP(+) is bound by residues 519–520 (SR), 525–529 (KVYVQ), and Asp-561. Residue Tyr-599 participates in FAD binding.

Belongs to the NADPH-dependent sulphite reductase flavoprotein subunit CysJ family. This sequence in the N-terminal section; belongs to the flavodoxin family. The protein in the C-terminal section; belongs to the flavoprotein pyridine nucleotide cytochrome reductase family. Alpha(8)-beta(8). The alpha component is a flavoprotein, the beta component is a hemoprotein. Requires FAD as cofactor. FMN serves as cofactor.

It carries out the reaction hydrogen sulfide + 3 NADP(+) + 3 H2O = sulfite + 3 NADPH + 4 H(+). It functions in the pathway sulfur metabolism; hydrogen sulfide biosynthesis; hydrogen sulfide from sulfite (NADPH route): step 1/1. Functionally, component of the sulfite reductase complex that catalyzes the 6-electron reduction of sulfite to sulfide. This is one of several activities required for the biosynthesis of L-cysteine from sulfate. The flavoprotein component catalyzes the electron flow from NADPH -&gt; FAD -&gt; FMN to the hemoprotein component. This is Sulfite reductase [NADPH] flavoprotein alpha-component from Escherichia coli O9:H4 (strain HS).